Consider the following 131-residue polypeptide: Insulin-like 3 (131 aa).

Residues 1–24 (MDPRLPAWALVLLGPALVFALGPA) form the signal peptide. Disulfide bonds link cysteine 34–cysteine 117, cysteine 46–cysteine 130, and cysteine 116–cysteine 121. Residues 58–104 (PVAAGDGELLQWLERRHLLYGLVANSEPAPGGPGLQPMPQTSHHHRH) constitute a propeptide, c peptide like. Positions 86–105 (APGGPGLQPMPQTSHHHRHR) are disordered.

Belongs to the insulin family. As to quaternary structure, heterodimer of a B chain and an A chain linked by two disulfide bonds. As to expression, highest expression in the Leydig cells of the testis.

The protein resides in the secreted. Seems to play a role in testicular function. May be a trophic hormone with a role in testicular descent in fetal life. Is a ligand for LGR8 receptor. This chain is Insulin-like 3 (INSL3), found in Callithrix jacchus (White-tufted-ear marmoset).